Reading from the N-terminus, the 378-residue chain is Ferrochelatase (378 aa).

Fe cation-binding residues include H214 and E295.

The protein belongs to the ferrochelatase family.

The protein resides in the cytoplasm. The catalysed reaction is heme b + 2 H(+) = protoporphyrin IX + Fe(2+). Its pathway is porphyrin-containing compound metabolism; protoheme biosynthesis; protoheme from protoporphyrin-IX: step 1/1. Its function is as follows. Catalyzes the ferrous insertion into protoporphyrin IX. This Hydrogenovibrio crunogenus (strain DSM 25203 / XCL-2) (Thiomicrospira crunogena) protein is Ferrochelatase.